A 476-amino-acid chain; its full sequence is Aspartyl/glutamyl-tRNA(Asn/Gln) amidotransferase subunit B (476 aa).

It belongs to the GatB/GatE family. GatB subfamily. In terms of assembly, heterotrimer of A, B and C subunits.

It carries out the reaction L-glutamyl-tRNA(Gln) + L-glutamine + ATP + H2O = L-glutaminyl-tRNA(Gln) + L-glutamate + ADP + phosphate + H(+). The catalysed reaction is L-aspartyl-tRNA(Asn) + L-glutamine + ATP + H2O = L-asparaginyl-tRNA(Asn) + L-glutamate + ADP + phosphate + 2 H(+). Functionally, allows the formation of correctly charged Asn-tRNA(Asn) or Gln-tRNA(Gln) through the transamidation of misacylated Asp-tRNA(Asn) or Glu-tRNA(Gln) in organisms which lack either or both of asparaginyl-tRNA or glutaminyl-tRNA synthetases. The reaction takes place in the presence of glutamine and ATP through an activated phospho-Asp-tRNA(Asn) or phospho-Glu-tRNA(Gln). The protein is Aspartyl/glutamyl-tRNA(Asn/Gln) amidotransferase subunit B of Moorella thermoacetica (strain ATCC 39073 / JCM 9320).